Reading from the N-terminus, the 95-residue chain is MTKSELIEKLADKLSHLSAKEVEKSIKEILELMAQSLSKGERIEIRGFGSFSLHYRAPRVGRNPKTGESVELSGKYVPHFKPGKELRERVNLSVA.

This sequence belongs to the bacterial histone-like protein family. In terms of assembly, heterodimer of an alpha and a beta chain.

Its function is as follows. This protein is one of the two subunits of integration host factor, a specific DNA-binding protein that functions in genetic recombination as well as in transcriptional and translational control. The sequence is that of Integration host factor subunit beta from Colwellia psychrerythraea (strain 34H / ATCC BAA-681) (Vibrio psychroerythus).